The primary structure comprises 1143 residues: DNA polymerase II large subunit (1143 aa).

Belongs to the archaeal DNA polymerase II family. As to quaternary structure, heterodimer of a large subunit and a small subunit.

It carries out the reaction DNA(n) + a 2'-deoxyribonucleoside 5'-triphosphate = DNA(n+1) + diphosphate. The catalysed reaction is Exonucleolytic cleavage in the 3'- to 5'-direction to yield nucleoside 5'-phosphates.. In terms of biological role, possesses two activities: a DNA synthesis (polymerase) and an exonucleolytic activity that degrades single-stranded DNA in the 3'- to 5'-direction. Has a template-primer preference which is characteristic of a replicative DNA polymerase. This chain is DNA polymerase II large subunit (polC), found in Archaeoglobus fulgidus (strain ATCC 49558 / DSM 4304 / JCM 9628 / NBRC 100126 / VC-16).